The primary structure comprises 386 residues: MSDNFYDVLGVSRDASEEEIKKAYRKQAAEHHPDVSDDDDAEERFKAIQKAKEVLTDEQKRQQYDQLGHDRFTEADKRGATGGGGPGGAGGPFGGAGGAGGAGGFEDIFNQFFGGGGGRGGGGGNRPRQGQDLRTGLTIDLEEAFEGATKEVTLTRPTQCDTCDGAGHPPDADVETCSQCNGRGQVQQVQQTPLGRVQQTSTCPRCEGSGELYSEDCADCGGDGVVREEATLSVEIPAGIRSGQSLRMEREGAPGENGGPNGDLLIEVDVDVGDRFERDGDDLRVNEAVSFPQAVFGDTIEVETVDGSVEMDVPTGTQSGETFRLKGKGMPRLRRRGRGDLYVKVGVVIPDSLNEEQREALEAFAEAGGEDVDVGGGFFKKLKSSF.

One can recognise a J domain in the interval 4-68 (NFYDVLGVSR…QKRQQYDQLG (65 aa)). 2 stretches are compositionally biased toward basic and acidic residues: residues 22 to 35 (KAYR…HPDV) and 43 to 79 (ERFK…DKRG). A disordered region spans residues 22–132 (KAYRKQAAEH…GGNRPRQGQD (111 aa)). Composition is skewed to gly residues over residues 80–104 (ATGG…GAGG) and 113–125 (FGGG…GGGN). Residues 147–229 (GATKEVTLTR…CGGDGVVREE (83 aa)) form a CR-type zinc finger. The Zn(2+) site is built by Cys160, Cys163, Cys177, Cys180, Cys203, Cys206, Cys217, and Cys220. 4 CXXCXGXG motif repeats span residues 160–167 (CDTCDGAG), 177–184 (CSQCNGRG), 203–210 (CPRCEGSG), and 217–224 (CADCGGDG).

This sequence belongs to the DnaJ family. Homodimer. It depends on Zn(2+) as a cofactor.

It localises to the cytoplasm. In terms of biological role, participates actively in the response to hyperosmotic and heat shock by preventing the aggregation of stress-denatured proteins and by disaggregating proteins, also in an autonomous, DnaK-independent fashion. Unfolded proteins bind initially to DnaJ; upon interaction with the DnaJ-bound protein, DnaK hydrolyzes its bound ATP, resulting in the formation of a stable complex. GrpE releases ADP from DnaK; ATP binding to DnaK triggers the release of the substrate protein, thus completing the reaction cycle. Several rounds of ATP-dependent interactions between DnaJ, DnaK and GrpE are required for fully efficient folding. Also involved, together with DnaK and GrpE, in the DNA replication of plasmids through activation of initiation proteins. The sequence is that of Chaperone protein DnaJ from Halorubrum lacusprofundi (strain ATCC 49239 / DSM 5036 / JCM 8891 / ACAM 34).